Reading from the N-terminus, the 84-residue chain is Magnetosome protein MamR (84 aa).

This sequence belongs to the magnetosome MamR family.

Its subcellular location is the magnetosome. In terms of biological role, may play a role in controlling magnetite number and size but not in control of magnetite morphology. The polypeptide is Magnetosome protein MamR (Paramagnetospirillum magneticum (strain ATCC 700264 / AMB-1) (Magnetospirillum magneticum)).